Consider the following 953-residue polypeptide: MFEKIPNQNSHSMGDNNTGYYNNNNNNNNNNNNNNNNSNNNNNNSNNNNNNNINNNNNNNNNNNNNNNNNNNNNNNTSQQLPSPQLSQPNSMNTTPNQTSPNLRSSPNRVANNMTQINILTPHLLPGSPSASPIPISSIPTASVYRQPFSSSSSSNHDQGSYPIINTKSIIPSASQLQSQNLNIINSINNNFSKDSPNSQNNTSFNEDTIFIASTTYGSSNTPNNNNNNINNNNSNNNNNSNNSNNNNNSTNNNNNSSNINSPNDFNNNHNNNNNNNNNNNNNNNNNNSSNSNINNNNNNSNNSNNNIDNSNNNNNNNNVRSGNSNVNANGHNRLKRKSKENIYNNNNQNNNNQNNNQNNNHNNNHNNNHNNNQNNNQNNIQNTNQNNIQNNHNQQNNNNHQNNNNQNNNYQNNNNQNSGNNNNQNHHNNKFNQNNNHNQNNHSNNQNKNNHNNNHNNNNHNNNNHNNNNNNHNNNNNNHNNNNNHNNQNNHNNQNNNHNNNQNNNYNNNQNNNYNPNNYGNNYNPNNNYNNSNNPNNMNNNYNHNQNNNNNNNNNNQNYNNNHNNQFNNQNNQIHNQSNNQNNYNQNNNHNNNNQNNNNNNQNNNNNNNQNNNNNNNNINNNNNNNNNNNNGNTGLSSSTNNSKHSSPRSSPNNSPLNYNTNEEYYNSGSSSPSSPGSPNSSILQITDGNNGFNNQNNLNNGNNGNQNYNNNNGQFNNNFDNNGQNNNNNNNNNNNNNNNNNENNRNSPTTTQPQIQTTQPLINGANSAFVFPSTPKTNSSTTLFGVMPNEQETWIEIRDLSCSISKMAKSSLTNGITEEMLNEIKEKGTDLINMIENVTQKEKLERKYNDDDRNRIFPPLTRPRRFRKKKKPNVTEPPVEKVKKKADTLFCTSCGTTQTPEWRKGPAGGKSLCNACGLHYAKLMKKEIQLSKVETTSSPPSTSMNVVNLLN.

Residues 1–21 (MFEKIPNQNSHSMGDNNTGYY) show a composition bias toward polar residues. Disordered regions lie at residues 1 to 109 (MFEK…SPNR) and 216 to 756 (TYGS…TQPQ). Residues 22–89 (NNNNNNNNNN…QLPSPQLSQP (68 aa)) are compositionally biased toward low complexity. Residues 90–109 (NSMNTTPNQTSPNLRSSPNR) show a composition bias toward polar residues. Composition is skewed to low complexity over residues 219 to 330 (SSNT…VNAN), 342 to 683 (NIYN…PNSS), and 690 to 756 (GNNG…TQPQ). Residues 893 to 918 (CTSCGTTQTPEWRKGPAGGKSLCNAC) form a GATA-type zinc finger. Residues 934–953 (KVETTSSPPSTSMNVVNLLN) form a disordered region.

The polypeptide is GATA zinc finger domain-containing protein 14 (gtaN) (Dictyostelium discoideum (Social amoeba)).